Consider the following 426-residue polypeptide: 3-phosphoshikimate 1-carboxyvinyltransferase (426 aa).

3-phosphoshikimate contacts are provided by K22, S23, and R27. Phosphoenolpyruvate is bound at residue K22. Residues G96 and R124 each coordinate phosphoenolpyruvate. 3-phosphoshikimate-binding residues include S170, S171, Q172, S198, D314, N337, and K341. Q172 is a binding site for phosphoenolpyruvate. The Proton acceptor role is filled by D314. Phosphoenolpyruvate-binding residues include R345, R387, and K412.

Belongs to the EPSP synthase family. In terms of assembly, monomer.

The protein localises to the cytoplasm. The catalysed reaction is 3-phosphoshikimate + phosphoenolpyruvate = 5-O-(1-carboxyvinyl)-3-phosphoshikimate + phosphate. Its pathway is metabolic intermediate biosynthesis; chorismate biosynthesis; chorismate from D-erythrose 4-phosphate and phosphoenolpyruvate: step 6/7. In terms of biological role, catalyzes the transfer of the enolpyruvyl moiety of phosphoenolpyruvate (PEP) to the 5-hydroxyl of shikimate-3-phosphate (S3P) to produce enolpyruvyl shikimate-3-phosphate and inorganic phosphate. In Shewanella halifaxensis (strain HAW-EB4), this protein is 3-phosphoshikimate 1-carboxyvinyltransferase.